The primary structure comprises 234 residues: Peptidase E (234 aa).

Residues S123, D138, and H160 each act as charge relay system in the active site.

The protein belongs to the peptidase S51 family.

It is found in the cytoplasm. The enzyme catalyses Dipeptidase E catalyzes the hydrolysis of dipeptides Asp-|-Xaa. It does not act on peptides with N-terminal Glu, Asn or Gln, nor does it cleave isoaspartyl peptides.. Hydrolyzes dipeptides containing N-terminal aspartate residues. May play a role in allowing the cell to use peptide aspartate to spare carbon otherwise required for the synthesis of the aspartate family of amino acids. This is Peptidase E from Actinobacillus pleuropneumoniae serotype 3 (strain JL03).